The sequence spans 384 residues: Glucans biosynthesis protein C (384 aa).

10 helical membrane passes run 17–37, 54–74, 91–111, 140–160, 173–193, 212–232, 240–260, 274–294, 311–331, and 338–358; these read AWLM…THSW, FIHA…SYML, VGIP…ILLQ, LWFL…FTWF, AISL…YAAI, FIVM…LAFI, FTTP…AYLL, TESV…FSLG, ASLF…AYIT, and LIGF…LYEI.

It belongs to the acyltransferase 3 family. OpgC subfamily.

It localises to the cell membrane. The protein operates within glycan metabolism; osmoregulated periplasmic glucan (OPG) biosynthesis. In terms of biological role, necessary for the succinyl substitution of periplasmic glucans. Could catalyze the transfer of succinyl residues from the cytoplasmic side of the membrane to the nascent glucan backbones on the periplasmic side of the membrane. The sequence is that of Glucans biosynthesis protein C from Salmonella typhi.